The sequence spans 351 residues: Phospho-N-acetylmuramoyl-pentapeptide-transferase (351 aa).

The next 10 helical transmembrane spans lie at 17–37, 63–83, 85–105, 124–144, 158–178, 190–210, 230–250, 254–274, 279–299, and 328–348; these read TAYA…FIIL, IPTM…FFWI, FWNI…CLGF, FKIY…YYFG, SLKL…LISA, GLAI…AYLA, LVVF…FNAY, IMMG…TALI, ILFA…IIQV, and QVVI…LSTL.

The protein belongs to the glycosyltransferase 4 family. MraY subfamily. Mg(2+) serves as cofactor.

The protein localises to the cell inner membrane. It carries out the reaction UDP-N-acetyl-alpha-D-muramoyl-L-alanyl-gamma-D-glutamyl-meso-2,6-diaminopimeloyl-D-alanyl-D-alanine + di-trans,octa-cis-undecaprenyl phosphate = di-trans,octa-cis-undecaprenyl diphospho-N-acetyl-alpha-D-muramoyl-L-alanyl-D-glutamyl-meso-2,6-diaminopimeloyl-D-alanyl-D-alanine + UMP. Its pathway is cell wall biogenesis; peptidoglycan biosynthesis. Its function is as follows. Catalyzes the initial step of the lipid cycle reactions in the biosynthesis of the cell wall peptidoglycan: transfers peptidoglycan precursor phospho-MurNAc-pentapeptide from UDP-MurNAc-pentapeptide onto the lipid carrier undecaprenyl phosphate, yielding undecaprenyl-pyrophosphoryl-MurNAc-pentapeptide, known as lipid I. The chain is Phospho-N-acetylmuramoyl-pentapeptide-transferase from Borrelia turicatae (strain 91E135).